Reading from the N-terminus, the 447-residue chain is Exodeoxyribonuclease 7 large subunit (447 aa).

The protein belongs to the XseA family. In terms of assembly, heterooligomer composed of large and small subunits.

Its subcellular location is the cytoplasm. It carries out the reaction Exonucleolytic cleavage in either 5'- to 3'- or 3'- to 5'-direction to yield nucleoside 5'-phosphates.. Bidirectionally degrades single-stranded DNA into large acid-insoluble oligonucleotides, which are then degraded further into small acid-soluble oligonucleotides. The polypeptide is Exodeoxyribonuclease 7 large subunit (Streptococcus mutans serotype c (strain ATCC 700610 / UA159)).